We begin with the raw amino-acid sequence, 100 residues long: Urease subunit gamma (100 aa).

This sequence belongs to the urease gamma subunit family. As to quaternary structure, heterotrimer of UreA (gamma), UreB (beta) and UreC (alpha) subunits. Three heterotrimers associate to form the active enzyme.

The protein localises to the cytoplasm. The enzyme catalyses urea + 2 H2O + H(+) = hydrogencarbonate + 2 NH4(+). It participates in nitrogen metabolism; urea degradation; CO(2) and NH(3) from urea (urease route): step 1/1. This Paraburkholderia xenovorans (strain LB400) protein is Urease subunit gamma.